The sequence spans 203 residues: LexA repressor (203 aa).

A DNA-binding region (H-T-H motif) is located at residues 32–52 (RAEICTAFGFRSPNAAETHLR). Residues serine 121 and lysine 158 each act as for autocatalytic cleavage activity in the active site.

It belongs to the peptidase S24 family. In terms of assembly, homodimer.

It catalyses the reaction Hydrolysis of Ala-|-Gly bond in repressor LexA.. In terms of biological role, represses a number of genes involved in the response to DNA damage (SOS response), including recA and lexA. In the presence of single-stranded DNA, RecA interacts with LexA causing an autocatalytic cleavage which disrupts the DNA-binding part of LexA, leading to derepression of the SOS regulon and eventually DNA repair. The sequence is that of LexA repressor from Aromatoleum aromaticum (strain DSM 19018 / LMG 30748 / EbN1) (Azoarcus sp. (strain EbN1)).